The following is a 216-amino-acid chain: MSNTRLPAPSFRATDFQAAFGVSRETLDRLAAYEALLRKWNPAINLVARSTLDDVWERHFADSAQLFALLPEGTRVLVDLGSGAGFPGLVLAILGVPEVHLIESDGRKAAFLREVARVTGAPATVHAQRAEQAEAPPADAVSARALADLSALLPLAARFLRPGGICLFPKGRTAADELTRARDSWTMRVEEFPSRTDPSGALLRLSEIAPRGMQIG.

S-adenosyl-L-methionine is bound by residues Gly81, Phe86, 130 to 131 (AE), and Arg144.

It belongs to the methyltransferase superfamily. RNA methyltransferase RsmG family.

It is found in the cytoplasm. The enzyme catalyses guanosine(527) in 16S rRNA + S-adenosyl-L-methionine = N(7)-methylguanosine(527) in 16S rRNA + S-adenosyl-L-homocysteine. In terms of biological role, specifically methylates the N7 position of guanine in position 527 of 16S rRNA. This is Ribosomal RNA small subunit methyltransferase G from Rhodospirillum centenum (strain ATCC 51521 / SW).